The chain runs to 453 residues: Bifunctional protein GlmU (453 aa).

Residues 1 to 226 are pyrophosphorylase; it reads MSFSAVILAA…PIEVEGVNNR (226 aa). UDP-N-acetyl-alpha-D-glucosamine contacts are provided by residues 8-11, Lys-22, Gln-73, 78-79, 100-102, Gly-137, Glu-151, Asn-166, and Asn-224; these read LAAG, GT, and YGD. Residue Asp-102 participates in Mg(2+) binding. Asn-224 provides a ligand contact to Mg(2+). The segment at 227 to 247 is linker; it reads IQLARLERAYQAMQAERLLEQ. Residues 248-453 form an N-acetyltransferase region; that stretch reads GVMLRDPSRF…KGWKRPVKQK (206 aa). UDP-N-acetyl-alpha-D-glucosamine-binding residues include Arg-330 and Lys-348. His-360 (proton acceptor) is an active-site residue. Residues Tyr-363 and Asn-374 each coordinate UDP-N-acetyl-alpha-D-glucosamine. Acetyl-CoA is bound by residues Ala-377, 383–384, Ser-402, Ala-420, and Arg-437; that span reads NY.

The protein in the N-terminal section; belongs to the N-acetylglucosamine-1-phosphate uridyltransferase family. In the C-terminal section; belongs to the transferase hexapeptide repeat family. Homotrimer. Mg(2+) is required as a cofactor.

The protein localises to the cytoplasm. The enzyme catalyses alpha-D-glucosamine 1-phosphate + acetyl-CoA = N-acetyl-alpha-D-glucosamine 1-phosphate + CoA + H(+). The catalysed reaction is N-acetyl-alpha-D-glucosamine 1-phosphate + UTP + H(+) = UDP-N-acetyl-alpha-D-glucosamine + diphosphate. It functions in the pathway nucleotide-sugar biosynthesis; UDP-N-acetyl-alpha-D-glucosamine biosynthesis; N-acetyl-alpha-D-glucosamine 1-phosphate from alpha-D-glucosamine 6-phosphate (route II): step 2/2. Its pathway is nucleotide-sugar biosynthesis; UDP-N-acetyl-alpha-D-glucosamine biosynthesis; UDP-N-acetyl-alpha-D-glucosamine from N-acetyl-alpha-D-glucosamine 1-phosphate: step 1/1. The protein operates within bacterial outer membrane biogenesis; LPS lipid A biosynthesis. In terms of biological role, catalyzes the last two sequential reactions in the de novo biosynthetic pathway for UDP-N-acetylglucosamine (UDP-GlcNAc). The C-terminal domain catalyzes the transfer of acetyl group from acetyl coenzyme A to glucosamine-1-phosphate (GlcN-1-P) to produce N-acetylglucosamine-1-phosphate (GlcNAc-1-P), which is converted into UDP-GlcNAc by the transfer of uridine 5-monophosphate (from uridine 5-triphosphate), a reaction catalyzed by the N-terminal domain. This Photobacterium profundum (strain SS9) protein is Bifunctional protein GlmU.